A 315-amino-acid chain; its full sequence is Methionyl-tRNA formyltransferase (315 aa).

(6S)-5,6,7,8-tetrahydrofolate is bound at residue 113-116 (SLLP).

It belongs to the Fmt family.

The catalysed reaction is L-methionyl-tRNA(fMet) + (6R)-10-formyltetrahydrofolate = N-formyl-L-methionyl-tRNA(fMet) + (6S)-5,6,7,8-tetrahydrofolate + H(+). In terms of biological role, attaches a formyl group to the free amino group of methionyl-tRNA(fMet). The formyl group appears to play a dual role in the initiator identity of N-formylmethionyl-tRNA by promoting its recognition by IF2 and preventing the misappropriation of this tRNA by the elongation apparatus. The polypeptide is Methionyl-tRNA formyltransferase (Shigella boydii serotype 4 (strain Sb227)).